The sequence spans 79 residues: Conotoxin Leo-O4 (79 aa).

The first 22 residues, 1–22 (MKLTCMMLVAVLFLTAWTFVTA), serve as a signal peptide directing secretion. The propeptide occupies 23–51 (NVSRNGLENLFPEERHEMMNPNAAKLNNR). 3 disulfides stabilise this stretch: Cys53–Cys70, Cys60–Cys74, and Cys69–Cys78.

This sequence belongs to the conotoxin O1 superfamily. In terms of tissue distribution, expressed by the venom duct.

It is found in the secreted. This Conus leopardus (Leopard cone) protein is Conotoxin Leo-O4.